The sequence spans 479 residues: MTFKVAIIGRPNVGKSTLFNRLVGRKLALVDDTPGVTRDRRVHAAKLYDLHFDVIDTAGFEDAGASTLPGRMRAQTEIAIHEADLIFFTIDAKSGLLPDDRTFAEIVRKSGKPVVLVANKAEAKGAQGGMLEAWELGLGEPIPVSAEHGQGMPDLRDAVIAALGEARAFGEEEEGEDDEIAATEVLIGEDIADPDAEDAHTYDNTKPMRIAVVGRPNAGKSTLINALIGEERLLTGPEAGITRDSISVDWDWHGRRLKLFDTAGMRRKARIHEKLEVMSVQDGLRAIRFAEIVIIVLDATIPFEKQDLQIADLIIREGRAPVIAFNKWDLIDHPQELLAELREKTERLLPQVRGIQAVPVSAETGRGLDKLMDAVLRTHKVWNSRVSTGKLNRWLEAILAHHPPPAVAGRRLKVKYVTQAKTRPPGFVVQCSRPDAMPQSYVRYLSNSLREAFDMPGVPIRIALRTSDNPFAGRAKKRG.

2 consecutive EngA-type G domains span residues 3–167 (FKVA…GEAR) and 208–383 (MRIA…KVWN). GTP-binding positions include 9–16 (GRPNVGKS), 56–60 (DTAGF), 119–122 (NKAE), 214–221 (GRPNAGKS), 261–265 (DTAGM), and 326–329 (NKWD). A KH-like domain is found at 384-468 (SRVSTGKLNR…PIRIALRTSD (85 aa)).

It belongs to the TRAFAC class TrmE-Era-EngA-EngB-Septin-like GTPase superfamily. EngA (Der) GTPase family. In terms of assembly, associates with the 50S ribosomal subunit.

Its function is as follows. GTPase that plays an essential role in the late steps of ribosome biogenesis. This chain is GTPase Der, found in Mesorhizobium japonicum (strain LMG 29417 / CECT 9101 / MAFF 303099) (Mesorhizobium loti (strain MAFF 303099)).